Consider the following 580-residue polypeptide: Mucolipin-1 (580 aa).

Residues 1–38 (MTAPAGPRGSETERLLTPNPGYGTQAGPSPAPPTPPEE) form a disordered region. The Cytoplasmic portion of the chain corresponds to 1 to 65 (MTAPAGPRGS…FRAKGRKPCK (65 aa)). Phosphoserine is present on S10. Residues 11 to 16 (ETERLL) carry the Dileucine motif; mediates targeting to lysosomes motif. The interval 42 to 62 (RRRLKYFFMSPCDKFRAKGRK) is interaction with phosphoinositides. A helical transmembrane segment spans residues 66-86 (LMLQVVKILVVTVQLILFGLS). Residues 87–298 (NQLAVTFREE…VFQHGDNSFR (212 aa)) lie on the Extracellular side of the membrane. The tract at residues 107–121 (LGYSDGADDTFAAYT) is extracellular/lumenal pore loop. An intrachain disulfide couples C166 to C192. Residue N230 is glycosylated (N-linked (GlcNAc...) asparagine). C253 and C284 are oxidised to a cystine. Residues 299–321 (LLFDVVVILTCSLSFLLCARSLL) traverse the membrane as a helical segment. At 322-350 (RGFLLQNEFVGFMWRQRGRVISLWERLEF) the chain is on the cytoplasmic side. A helical membrane pass occupies residues 351-371 (VNGWYILLVTSDVLTISGTIM). At 372–382 (KIGIEAKNLAS) the chain is on the extracellular side. A helical transmembrane segment spans residues 383 to 405 (YDVCSILLGTSTLLVWVGVIRYL). The Cytoplasmic portion of the chain corresponds to 406–427 (TFFHNYNILIATLRVALPSVMR). Residues 428 to 448 (FCCCVAVIYLGYCFCGWIVLG) traverse the membrane as a helical segment. Over 449 to 456 (PYHVKFRS) the chain is Extracellular. The segment at residues 457-477 (LSMVSECLFSLINGDDMFVTF) is an intramembrane region (pore-forming). Positions 469–474 (NGDDMF) match the Selectivity filter motif. The Extracellular portion of the chain corresponds to 478-491 (AAMQAQQGRSSLVW). The chain crosses the membrane as a helical span at residues 492 to 513 (LFSQLYLYSFISLFIYMVLSLF). Over 514–580 (IALITGAYDT…PSEEHSLLVN (67 aa)) the chain is Cytoplasmic. 2 positions are modified to phosphoserine; by PAK: S557 and S559. Positions 565-567 (CCC) are required for palmitoylation and association with membranes. Positions 573–578 (EEHSLL) match the Dileucine internalization motif; mediates AP2 complex-dependent internalization motif.

This sequence belongs to the transient receptor (TC 1.A.4) family. Polycystin subfamily. MCOLN1 sub-subfamily. Homotetramer. Homooligomer. Can heterooligomerize with MCOLN2 or MCOLN3; heteromeric assemblies have different channel properties as compared to the respective homooligomers and may be tissue-specific. Interacts with PDCD6. Interacts with TMEM163. Interacts with LAPTM4B. Palmitoylated; involved in association with membranes. In terms of processing, phosphorylation by PKA inhibits channel activity. Dephosphorylation increases activity. Post-translationally, proteolytically cleaved probably involving multiple lysosomal proteases including cathepsin B; inhibits lysosomal channel activity. As to expression, widely expressed in adult and fetal tissues.

Its subcellular location is the late endosome membrane. It is found in the lysosome membrane. The protein resides in the cytoplasmic vesicle membrane. The protein localises to the cell projection. It localises to the phagocytic cup. Its subcellular location is the cytoplasmic vesicle. It is found in the phagosome membrane. The protein resides in the cell membrane. It catalyses the reaction Ca(2+)(in) = Ca(2+)(out). The catalysed reaction is Fe(2+)(in) = Fe(2+)(out). The enzyme catalyses Mg(2+)(in) = Mg(2+)(out). It carries out the reaction K(+)(in) = K(+)(out). It catalyses the reaction Na(+)(in) = Na(+)(out). Its activity is regulated as follows. Channel activity is controlled by multiple regulatory mechanisms in different subcellular compartments. Channel function is transiently modulated by changes in Ca(2+) in a pH-dependent manner; pH changes modify the aggregation state of unitary channels; a negative cooperativity between extracellular/lumenal Ca(2+) and H(+) is suggested. Regulated by phosphoinositides in a compartment-specific manner: in lysosomes activated by PtdIns(3,5)P2 (Phosphatidylinositol 3,5-bisphosphate) and at the plasma membrane inhibited by PtdIns(4,5)P2 (Phosphatidylinositol 4,5-bisphosphate). Nonselective cation channel probably playing a role in the regulation of membrane trafficking events and of metal homeostasis. Acts as a Ca(2+)-permeable cation channel with inwardly rectifying activity. Proposed to play a major role in Ca(2+) release from late endosome and lysosome vesicles to the cytoplasm, which is important for many lysosome-dependent cellular events, including the fusion and trafficking of these organelles, exocytosis and autophagy. Required for efficient uptake of large particles in macrophages in which Ca(2+) release from the lysosomes triggers lysosomal exocytosis. May also play a role in phagosome-lysosome fusion. Involved in lactosylceramide trafficking indicative for a role in the regulation of late endocytic membrane fusion/fission events. By mediating lysosomal Ca(2+) release is involved in regulation of mTORC1 signaling and in mTOR/TFEB-dependent lysosomal adaptation to environmental cues such as nutrient levels. Seems to act as lysosomal active oxygen species (ROS) sensor involved in ROS-induced TFEB activation and autophagy. Also functions as a Fe(2+) permeable channel in late endosomes and lysosomes. Also permeable to Mg(2+), Na(+). K(+) and Cs(+). Proposed to play a role in zinc homeostasis probably implicating its association with TMEM163 In adaptive immunity, TRPML2 and TRPML1 may play redundant roles in the function of the specialized lysosomes of B cells. In terms of biological role, may contribute to cellular lipase activity within the late endosomal pathway or at the cell surface which may be involved in processes of membrane reshaping and vesiculation, especially the growth of tubular structures. However, it is not known, whether it conveys the enzymatic activity directly, or merely facilitates the activity of an associated phospholipase. The chain is Mucolipin-1 from Homo sapiens (Human).